Here is a 237-residue protein sequence, read N- to C-terminus: Ribonuclease 3 (237 aa).

The RNase III domain maps to 3–133 (SRQPLLDALG…LLGAIYLQHG (131 aa)). Glutamate 43 contacts Mg(2+). The active site involves aspartate 47. Mg(2+) is bound by residues aspartate 119 and glutamate 122. Residue glutamate 122 is part of the active site. The 69-residue stretch at 160-228 (DWKTSLQELT…AAATWKALDV (69 aa)) folds into the DRBM domain.

This sequence belongs to the ribonuclease III family. Homodimer. Mg(2+) serves as cofactor.

Its subcellular location is the cytoplasm. It carries out the reaction Endonucleolytic cleavage to 5'-phosphomonoester.. Functionally, digests double-stranded RNA. Involved in the processing of primary rRNA transcript to yield the immediate precursors to the large and small rRNAs (23S and 16S). Processes some mRNAs, and tRNAs when they are encoded in the rRNA operon. Processes pre-crRNA and tracrRNA of type II CRISPR loci if present in the organism. In Mycolicibacterium paratuberculosis (strain ATCC BAA-968 / K-10) (Mycobacterium paratuberculosis), this protein is Ribonuclease 3.